Consider the following 84-residue polypeptide: Beta-toxin Tf1a (84 aa).

Positions 1–20 are cleaved as a signal peptide; it reads MKGMILFISCLLLIGIVVEC. Residues 21–82 form the LCN-type CS-alpha/beta domain; sequence KEGYLMDHEG…VWERATNRCG (62 aa). Intrachain disulfides connect Cys-31/Cys-81, Cys-35/Cys-57, Cys-43/Cys-62, and Cys-47/Cys-64. A Cysteine amide modification is found at Cys-81.

The protein belongs to the long (4 C-C) scorpion toxin superfamily. Sodium channel inhibitor family. Beta subfamily. As to expression, expressed by the venom gland.

It localises to the secreted. Functionally, beta toxins bind voltage-independently at site-4 of sodium channels (Nav) and shift the voltage of activation toward more negative potentials thereby affecting sodium channel activation and promoting spontaneous and repetitive firing. The toxin induces a leftward shift, on all channels tested (including Blattella germanica and Varroa destructor Nav1), displacing a change in voltage dependence activation to more hyperpolarized potentials. In addition, the toxin mostly inhibits peak current of hNav1.4/SCN4A (53% inhibition of peak current at 100 nM) and hNav1.5/SCN5A (71% inhibition). This chain is Beta-toxin Tf1a, found in Tityus fasciolatus (Central Brazilian scorpion).